A 416-amino-acid chain; its full sequence is NADH-quinone oxidoreductase subunit H (416 aa).

The next 9 membrane-spanning stretches (helical) occupy residues Leu16 to Ile36, Pro84 to Ile104, Leu124 to Leu144, Val165 to Thr185, Ser197 to Gly217, Val260 to Leu280, Trp288 to Leu308, Phe320 to Ala340, and Trp353 to Trp373.

This sequence belongs to the complex I subunit 1 family. NDH-1 is composed of 14 different subunits. Subunits NuoA, H, J, K, L, M, N constitute the membrane sector of the complex.

Its subcellular location is the cell membrane. The catalysed reaction is a quinone + NADH + 5 H(+)(in) = a quinol + NAD(+) + 4 H(+)(out). In terms of biological role, NDH-1 shuttles electrons from NADH, via FMN and iron-sulfur (Fe-S) centers, to quinones in the respiratory chain. The immediate electron acceptor for the enzyme in this species is believed to be menaquinone. Couples the redox reaction to proton translocation (for every two electrons transferred, four hydrogen ions are translocated across the cytoplasmic membrane), and thus conserves the redox energy in a proton gradient. This subunit may bind ubiquinone. The protein is NADH-quinone oxidoreductase subunit H of Mycobacterium sp. (strain KMS).